Reading from the N-terminus, the 62-residue chain is MTLAFQLAVFALIATSSILLIGVPVVFASPDGWSSNKNVLFSGTSLWIGLVFLVGILNSLIS.

2 consecutive transmembrane segments (helical) span residues 8-28 (AVFA…VVFA) and 41-61 (FSGT…NSLI).

It belongs to the PsbZ family. In terms of assembly, PSII is composed of 1 copy each of membrane proteins PsbA, PsbB, PsbC, PsbD, PsbE, PsbF, PsbH, PsbI, PsbJ, PsbK, PsbL, PsbM, PsbT, PsbY, PsbZ, Psb30/Ycf12, at least 3 peripheral proteins of the oxygen-evolving complex and a large number of cofactors. It forms dimeric complexes.

It is found in the plastid. It localises to the chloroplast thylakoid membrane. Its function is as follows. May control the interaction of photosystem II (PSII) cores with the light-harvesting antenna, regulates electron flow through the 2 photosystem reaction centers. PSII is a light-driven water plastoquinone oxidoreductase, using light energy to abstract electrons from H(2)O, generating a proton gradient subsequently used for ATP formation. This is Photosystem II reaction center protein Z from Daucus carota (Wild carrot).